Reading from the N-terminus, the 105-residue chain is uncharacterized protein (105 aa).

Residues 14-104 form the ABM domain; the sequence is HYITACLKII…VEWLMKSNVN (91 aa).

This is an uncharacterized protein from Bacillus subtilis (strain 168).